Consider the following 422-residue polypeptide: Serine--tRNA ligase (422 aa).

229–231 lines the L-serine pocket; that stretch reads TAE. Position 260–262 (260–262) interacts with ATP; the sequence is RRE. L-serine is bound at residue Glu283. 347 to 350 is a binding site for ATP; it reads EISS. An L-serine-binding site is contributed by Ser383.

The protein belongs to the class-II aminoacyl-tRNA synthetase family. Type-1 seryl-tRNA synthetase subfamily. In terms of assembly, homodimer. The tRNA molecule binds across the dimer.

It is found in the cytoplasm. It catalyses the reaction tRNA(Ser) + L-serine + ATP = L-seryl-tRNA(Ser) + AMP + diphosphate + H(+). It carries out the reaction tRNA(Sec) + L-serine + ATP = L-seryl-tRNA(Sec) + AMP + diphosphate + H(+). It participates in aminoacyl-tRNA biosynthesis; selenocysteinyl-tRNA(Sec) biosynthesis; L-seryl-tRNA(Sec) from L-serine and tRNA(Sec): step 1/1. Catalyzes the attachment of serine to tRNA(Ser). Is also able to aminoacylate tRNA(Sec) with serine, to form the misacylated tRNA L-seryl-tRNA(Sec), which will be further converted into selenocysteinyl-tRNA(Sec). This chain is Serine--tRNA ligase, found in Pelobacter propionicus (strain DSM 2379 / NBRC 103807 / OttBd1).